Here is a 285-residue protein sequence, read N- to C-terminus: Nucleotide-binding protein Pmen_0867 (285 aa).

8-15 (GRSGSGKS) contributes to the ATP binding site. GTP is bound at residue 60–63 (DARN).

This sequence belongs to the RapZ-like family.

In terms of biological role, displays ATPase and GTPase activities. The protein is Nucleotide-binding protein Pmen_0867 of Ectopseudomonas mendocina (strain ymp) (Pseudomonas mendocina).